Reading from the N-terminus, the 562-residue chain is Eukaryotic translation initiation factor 3 subunit L (562 aa).

A PCI domain is found at 329–535 (DAIRVFANIL…IHIADTKVAR (207 aa)).

Belongs to the eIF-3 subunit L family. As to quaternary structure, component of the eukaryotic translation initiation factor 3 (eIF-3) complex, which is composed of 13 subunits: eif3a, eif3b, eif3c, eif3d, eif3e, eif3f, eif3g, eif3h, eif3i, eif3j, eif3k, eif3l and eif3m.

The protein localises to the cytoplasm. Functionally, component of the eukaryotic translation initiation factor 3 (eIF-3) complex, which is involved in protein synthesis of a specialized repertoire of mRNAs and, together with other initiation factors, stimulates binding of mRNA and methionyl-tRNAi to the 40S ribosome. The eIF-3 complex specifically targets and initiates translation of a subset of mRNAs involved in cell proliferation. This chain is Eukaryotic translation initiation factor 3 subunit L (eif3l), found in Xenopus tropicalis (Western clawed frog).